The primary structure comprises 3431 residues: KICSTOR complex protein SZT2 (3431 aa).

Disordered stretches follow at residues 699-731, 1067-1101, and 1162-1231; these read SKEPTPKVKRKGLGGVGGSSPSKSPPTLGPQQA, LRDPGPEGPPVGGHAVAKDRAGNSTQASGDSTLPS, and KPKL…GADG. The tract at residues 1082-1188 is mediates interaction with the GATOR1 complex; sequence VAKDRAGNST…ATGTKATESQ (107 aa). Composition is skewed to polar residues over residues 1088–1101 and 1182–1212; these read GNSTQASGDSTLPS and TKATESQVPTLSVTLASDSAQDSGEPSTPSC. Ser1275 bears the Phosphoserine mark. Residues 1356-1378 form a disordered region; the sequence is PPSPGPLSPGPFSSSIEEGPEPR. Ser1415 carries the post-translational modification Phosphoserine. 7 disordered regions span residues 1512-1534, 1629-1678, 1806-1883, 2113-2148, 2450-2512, 2735-2756, and 2866-2899; these read YRESREPDLGPAGLDSASLSDAD, PPAS…HPGL, RAED…PGET, PPSLALSRSQEPISSEDSVAPRSPLDMASSRSSDAV, TEAG…LEEG, ASPPLSREQGRLSGSSRGGGPL, and ETCAPSEGQRRPCPESGSGSREVPTSCESLDVPP. Thr1640 carries the phosphothreonine modification. Polar residues predominate over residues 1641–1657; it reads SESSASFPRSPGQPSSL. Ser1650 is subject to Phosphoserine. Residues 1832–1854 show a composition bias toward low complexity; sequence PLISLPSLSQGGSQPGPSRGLSL. Positions 2118 to 2129 are enriched in polar residues; that stretch reads LSRSQEPISSED. A compositionally biased stretch (basic and acidic residues) spans 2460–2473; sequence TTDDIVLDRPEDTR. A compositionally biased stretch (low complexity) spans 2739 to 2749; it reads LSREQGRLSGS.

As to quaternary structure, part of the KICSTOR complex composed of KPTN, ITFG2, KICS2 and SZT2. SZT2 probably serves as a link between the other three proteins in the KICSTOR complex and may mediate the direct interaction with the GATOR complex via GATOR1. The KICSTOR complex interacts directly with the GATOR1 complex and most probably indirectly with the GATOR2 complex in an amino acid-independent manner. Mostly expressed in brain, spinal cord and lung.

It is found in the lysosome membrane. Its subcellular location is the peroxisome. As part of the KICSTOR complex functions in the amino acid-sensing branch of the TORC1 signaling pathway. Recruits, in an amino acid-independent manner, the GATOR1 complex to the lysosomal membranes and allows its interaction with GATOR2 and the RAG GTPases. Functions upstream of the RAG GTPases and is required to negatively regulate mTORC1 signaling in absence of amino acids. In absence of the KICSTOR complex mTORC1 is constitutively localized to the lysosome and activated. The KICSTOR complex is also probably involved in the regulation of mTORC1 by glucose. May play a role in the cellular response to oxidative stress. The polypeptide is KICSTOR complex protein SZT2 (Mus musculus (Mouse)).